A 503-amino-acid polypeptide reads, in one-letter code: AMP phosphorylase (503 aa).

Residues Gly168, 194 to 199 (SRAITG), and Ser203 contribute to the AMP site. Asp256 (proton donor) is an active-site residue. Ser264 and Lys288 together coordinate AMP.

Belongs to the thymidine/pyrimidine-nucleoside phosphorylase family. Type 2 subfamily.

The enzyme catalyses AMP + phosphate = alpha-D-ribose 1,5-bisphosphate + adenine. The catalysed reaction is CMP + phosphate = cytosine + alpha-D-ribose 1,5-bisphosphate. It carries out the reaction UMP + phosphate = alpha-D-ribose 1,5-bisphosphate + uracil. Catalyzes the conversion of AMP and phosphate to adenine and ribose 1,5-bisphosphate (R15P). Exhibits phosphorylase activity toward CMP and UMP in addition to AMP. Functions in an archaeal AMP degradation pathway, together with R15P isomerase and RubisCO. In Methanocella arvoryzae (strain DSM 22066 / NBRC 105507 / MRE50), this protein is AMP phosphorylase.